The primary structure comprises 284 residues: Tegument protein UL23 (284 aa).

Belongs to the herpesviridae US22 family. As to quaternary structure, interacts with host NMI; this interaction inhibits NMI interaction with STAT1.

The protein localises to the virion tegument. It localises to the host cytoplasm. Its function is as follows. Plays a role in the inhibition of host innate immune response by disrupting the interaction between NMI and STAT1. In turn, NMI-mediated transcription of interferon-gamma stimulated genes is inhibited. This is Tegument protein UL23 (UL23) from Homo sapiens (Human).